Reading from the N-terminus, the 421-residue chain is Chitin deacetylase (421 aa).

A signal peptide spans 1-21; sequence MQIKTFALSAAIAQVATLALA. N-linked (GlcNAc...) asparagine glycans are attached at residues Asn-39, Asn-70, Asn-87, and Asn-106. In terms of domain architecture, NodB homology spans 157-349; sequence ETWGLTYDDG…YKQVIDVATC (193 aa). The Proton acceptor role is filled by Asp-164. Asp-164 contacts acetate. Asp-165 serves as a coordination point for Co(2+). A glycan (N-linked (GlcNAc...) asparagine) is linked at Asn-168. Co(2+) contacts are provided by His-214 and His-218. Residue Tyr-255 coordinates acetate. Residue Asn-307 is glycosylated (N-linked (GlcNAc...) asparagine). The active-site Proton donor is His-320. 3 N-linked (GlcNAc...) asparagine glycosylation sites follow: Asn-323, Asn-351, and Asn-367. The GPI-anchor amidated threonine moiety is linked to residue Thr-390. Positions 391–421 are cleaved as a propeptide — removed in mature form; it reads AAAHIQASTSGAMSVLPNLALISAFIATLLF.

Belongs to the polysaccharide deacetylase family. Co(2+) is required as a cofactor.

It is found in the secreted. It localises to the cell wall. The protein resides in the cell membrane. It catalyses the reaction [(1-&gt;4)-N-acetyl-beta-D-glucosaminyl](n) + n H2O = chitosan + n acetate. Functionally, hydrolyzes the N-acetamido groups of N-acetyl-D-glucosamine residues in chitin to form chitosan and acetate. The protein is Chitin deacetylase of Amylomyces rouxii (Filamentous fungus).